The chain runs to 216 residues: Homeobox-leucine zipper protein ATHB-40 (216 aa).

Residues 28-52 form a disordered region; sequence GEVKQPKRRRKKTKGSVASADGGNG. The segment at residues 52–111 is a DNA-binding region (homeobox); sequence GLFRKRKLTDEQVNMLEMSFGDEHKLESERKDRLAAELGLDPRQVAVWFQNRRARWKNKR. The tract at residues 112–140 is leucine-zipper; the sequence is LEEEYNKLKNSHDNVVVDKCRLESEVIQL.

Belongs to the HD-ZIP homeobox family. Class I subfamily. Expressed in roots, flowers and siliques.

It is found in the nucleus. Functionally, probable transcription factor. This Arabidopsis thaliana (Mouse-ear cress) protein is Homeobox-leucine zipper protein ATHB-40 (ATHB-40).